Reading from the N-terminus, the 407-residue chain is Transcriptional regulator UL34 (407 aa).

Positions 268–330 (AAGPPEADEN…ENEEEEEELF (63 aa)) are disordered. Acidic residues predominate over residues 273 to 286 (EADENNDEGEEDDD). The segment covering 287–301 (ELRHSDPAPLHDSKK) has biased composition (basic and acidic residues). Basic residues predominate over residues 302 to 312 (PRNARRPRTRV).

This sequence belongs to the HHV-5 UL34 protein family.

The protein localises to the host nucleus. Functionally, acts as a transcriptional repressor of the US3 gene expression through a specific DNA sequence named the transcriptional repressive element (tre). This Homo sapiens (Human) protein is Transcriptional regulator UL34 (UL34).